Reading from the N-terminus, the 366-residue chain is DNA replication and repair protein RecF (366 aa).

Position 30–37 (Gly30–Thr37) interacts with ATP.

Belongs to the RecF family.

It localises to the cytoplasm. Its function is as follows. The RecF protein is involved in DNA metabolism; it is required for DNA replication and normal SOS inducibility. RecF binds preferentially to single-stranded, linear DNA. It also seems to bind ATP. The chain is DNA replication and repair protein RecF from Streptococcus thermophilus (strain CNRZ 1066).